Consider the following 456-residue polypeptide: Probable transcription factor At3g04930 (456 aa).

Residues 1–71 (MTSDHRDALF…LNSPSTSSLP (71 aa)) are disordered. Composition is skewed to acidic residues over residues 15-38 (ESPD…DLRD) and 50-62 (AEAE…EEDL). Ser-16 carries the post-translational modification Phosphoserine.

The protein belongs to the GeBP family.

The chain is Probable transcription factor At3g04930 from Arabidopsis thaliana (Mouse-ear cress).